A 336-amino-acid polypeptide reads, in one-letter code: Holliday junction branch migration complex subunit RuvB (336 aa).

The tract at residues 1 to 185 is large ATPase domain (RuvB-L); that stretch reads MSIIVERLLS…FGVLSRVEYY (185 aa). Residues Leu-24, Arg-25, Gly-66, Lys-69, Thr-70, Thr-71, 132-134, Arg-175, Tyr-185, and Arg-222 each bind ATP; that span reads EDF. Mg(2+) is bound at residue Thr-70. Residues 186-256 form a small ATPAse domain (RuvB-S) region; sequence TVDQLSAIVE…ITQMALELLQ (71 aa). Residues 259-336 are head domain (RuvB-H); sequence KLGLDHIDHK…EHFGMEIPKV (78 aa). Arg-314 and Arg-319 together coordinate DNA.

Belongs to the RuvB family. In terms of assembly, homohexamer. Forms an RuvA(8)-RuvB(12)-Holliday junction (HJ) complex. HJ DNA is sandwiched between 2 RuvA tetramers; dsDNA enters through RuvA and exits via RuvB. An RuvB hexamer assembles on each DNA strand where it exits the tetramer. Each RuvB hexamer is contacted by two RuvA subunits (via domain III) on 2 adjacent RuvB subunits; this complex drives branch migration. In the full resolvosome a probable DNA-RuvA(4)-RuvB(12)-RuvC(2) complex forms which resolves the HJ.

The protein localises to the cytoplasm. It carries out the reaction ATP + H2O = ADP + phosphate + H(+). The RuvA-RuvB-RuvC complex processes Holliday junction (HJ) DNA during genetic recombination and DNA repair, while the RuvA-RuvB complex plays an important role in the rescue of blocked DNA replication forks via replication fork reversal (RFR). RuvA specifically binds to HJ cruciform DNA, conferring on it an open structure. The RuvB hexamer acts as an ATP-dependent pump, pulling dsDNA into and through the RuvAB complex. RuvB forms 2 homohexamers on either side of HJ DNA bound by 1 or 2 RuvA tetramers; 4 subunits per hexamer contact DNA at a time. Coordinated motions by a converter formed by DNA-disengaged RuvB subunits stimulates ATP hydrolysis and nucleotide exchange. Immobilization of the converter enables RuvB to convert the ATP-contained energy into a lever motion, pulling 2 nucleotides of DNA out of the RuvA tetramer per ATP hydrolyzed, thus driving DNA branch migration. The RuvB motors rotate together with the DNA substrate, which together with the progressing nucleotide cycle form the mechanistic basis for DNA recombination by continuous HJ branch migration. Branch migration allows RuvC to scan DNA until it finds its consensus sequence, where it cleaves and resolves cruciform DNA. In Bacillus cereus (strain ATCC 14579 / DSM 31 / CCUG 7414 / JCM 2152 / NBRC 15305 / NCIMB 9373 / NCTC 2599 / NRRL B-3711), this protein is Holliday junction branch migration complex subunit RuvB.